We begin with the raw amino-acid sequence, 316 residues long: tRNA pseudouridine synthase B (316 aa).

Asp-47 (nucleophile) is an active-site residue.

It belongs to the pseudouridine synthase TruB family. Type 1 subfamily.

The enzyme catalyses uridine(55) in tRNA = pseudouridine(55) in tRNA. Responsible for synthesis of pseudouridine from uracil-55 in the psi GC loop of transfer RNAs. This is tRNA pseudouridine synthase B from Photobacterium profundum (strain SS9).